A 183-amino-acid polypeptide reads, in one-letter code: Gamma-crystallin N-B (183 aa).

Beta/gamma crystallin 'Greek key' domains follow at residues 6–46 (GKIC…RVES), 47–89 (GAWI…RPIR), 95–136 (YRME…RVFG), and 138–180 (GAWV…RRIV).

The protein belongs to the beta/gamma-crystallin family. Monomer.

Crystallins are the dominant structural components of the vertebrate eye lens. This Danio rerio (Zebrafish) protein is Gamma-crystallin N-B (crygnb).